Reading from the N-terminus, the 506-residue chain is Cysteine--tRNA ligase (506 aa).

Cys43 provides a ligand contact to Zn(2+). Positions 45–55 match the 'HIGH' region motif; sequence VTVYDLCHLGH. Positions 237, 262, and 266 each coordinate Zn(2+). A 'KMSKS' region motif is present at residues 294-298; the sequence is KMSKS. Lys297 provides a ligand contact to ATP.

The protein belongs to the class-I aminoacyl-tRNA synthetase family. Monomer. The cofactor is Zn(2+).

It is found in the cytoplasm. The enzyme catalyses tRNA(Cys) + L-cysteine + ATP = L-cysteinyl-tRNA(Cys) + AMP + diphosphate. In Synechococcus sp. (strain JA-3-3Ab) (Cyanobacteria bacterium Yellowstone A-Prime), this protein is Cysteine--tRNA ligase.